Reading from the N-terminus, the 198-residue chain is Superoxide dismutase [Fe] (198 aa).

Fe cation is bound by residues H27, H74, D158, and H162.

It belongs to the iron/manganese superoxide dismutase family. Homodimer. The cofactor is Fe cation.

The protein localises to the cytoplasm. It carries out the reaction 2 superoxide + 2 H(+) = H2O2 + O2. Its function is as follows. Destroys superoxide anion radicals which are normally produced within the cells and which are toxic to biological systems. The sequence is that of Superoxide dismutase [Fe] (SODB) from Plasmodium falciparum (isolate HB3).